Reading from the N-terminus, the 464-residue chain is uncharacterized protein (464 aa).

Disordered stretches follow at residues 290 to 374 and 445 to 464; these read YRKQ…ERPK and ETDD…PLEE. A compositionally biased stretch (low complexity) spans 293–302; it reads QQQWQQQQQQ. Positions 303 to 318 are enriched in basic residues; it reads RKVKTPIKKQEAKKKA. Polar residues predominate over residues 352-367; it reads DMKQQQQMEKGTTSKQ. Acidic residues predominate over residues 445 to 454; the sequence is ETDDEDEENQ.

This is an uncharacterized protein from Macaca fascicularis (Crab-eating macaque).